The following is a 175-amino-acid chain: Transcriptional repressor NrdR (175 aa).

A zinc finger spans residues 3-32 (CPYCSHPDSKVIDSRDVDDGVRRRRECVVC). The region spanning 47–137 (LFVVKKDQRR…VYREFTDITQ (91 aa)) is the ATP-cone domain.

It belongs to the NrdR family. Zn(2+) is required as a cofactor.

Its function is as follows. Negatively regulates transcription of bacterial ribonucleotide reductase nrd genes and operons by binding to NrdR-boxes. This chain is Transcriptional repressor NrdR, found in Dehalococcoides mccartyi (strain CBDB1).